Consider the following 550-residue polypeptide: Selinene synthase (550 aa).

Mg(2+)-binding residues include aspartate 314, aspartate 318, aspartate 450, and glutamate 458. A DDXXD motif motif is present at residues 314-318 (DDIYD).

This sequence belongs to the terpene synthase family. Mg(2+) is required as a cofactor. Requires Mn(2+) as cofactor.

It catalyses the reaction (2E,6E)-farnesyl diphosphate = (+)-beta-selinene + diphosphate. The catalysed reaction is (2E,6E)-farnesyl diphosphate = alpha-selinene + diphosphate. It functions in the pathway secondary metabolite biosynthesis; terpenoid biosynthesis. In terms of biological role, sesquiterpene synthase that catalyzes the formation of alpha- and beta-selinene from trans,trans-farnesyl diphosphate (FPP). Also produces some nerolidol. This chain is Selinene synthase (SES), found in Ocimum basilicum (Sweet basil).